A 257-amino-acid polypeptide reads, in one-letter code: HTH-type transcriptional activator mta (257 aa).

One can recognise an HTH merR-type domain in the interval K2 to H71. Residues V5–N24 constitute a DNA-binding region (H-T-H motif). The tract at residues H71 to F74 is hinge. The tract at residues R76–T104 is essential for dimerization. Positions R76 to S107 form a coiled coil.

Homodimer.

It is found in the cytoplasm. Global transcriptional regulator that activates transcription of bmr and blt by binding directly to their promoter. Also stimulates the expression of the mta gene itself, ydfK and ymfE. The protein is HTH-type transcriptional activator mta (mta) of Bacillus subtilis (strain 168).